The primary structure comprises 185 residues: Ribosome-recycling factor (185 aa).

This sequence belongs to the RRF family.

It localises to the cytoplasm. In terms of biological role, responsible for the release of ribosomes from messenger RNA at the termination of protein biosynthesis. May increase the efficiency of translation by recycling ribosomes from one round of translation to another. The polypeptide is Ribosome-recycling factor (Azoarcus sp. (strain BH72)).